The sequence spans 431 residues: Galactose-3-O-sulfotransferase 3 (431 aa).

Over 1–19 the chain is Cytoplasmic; it reads MPPILQRLQQATKMMSRRK. The helical; Signal-anchor for type II membrane protein transmembrane segment at 20-40 threads the bilayer; that stretch reads ILLLVLGCSTVSLLIHQGAQL. Residues 41–431 lie on the Lumenal side of the membrane; that stretch reads SWYPKLFPLS…RVLPRGPQGP (391 aa). Residues Asn-91, Asn-110, Asn-177, and Asn-302 are each glycosylated (N-linked (GlcNAc...) asparagine). The disordered stretch occupies residues 399–431; the sequence is QKRRGGARARPEPVLDNPPPRPIRVLPRGPQGP.

This sequence belongs to the galactose-3-O-sulfotransferase family. Mg(2+) serves as cofactor. In terms of tissue distribution, highly expressed in thyroid, brain, kidney, heart and spinal cord.

It localises to the golgi apparatus. The protein localises to the golgi stack membrane. The protein operates within protein modification; carbohydrate sulfation. Its function is as follows. Transfers a sulfate to position 3 of non-reducing beta-galactosyl residues in N-glycans and core2-branched O-glycans. Has high activity towards Gal-beta-1,4-GlcNAc, Gal-beta-1,4(Fuc-alpha-1,3)GlcNAc and lower activity towards Gal-beta-1,3(Fuc-alpha-1,4)GlcNAc. The sequence is that of Galactose-3-O-sulfotransferase 3 (GAL3ST3) from Homo sapiens (Human).